The chain runs to 456 residues: RuvB-like 1 (456 aa).

K2 participates in a covalent cross-link: Glycyl lysine isopeptide (Lys-Gly) (interchain with G-Cter in SUMO2). ATP is bound at residue 70 to 77 (GPPGTGKT). K225 is covalently cross-linked (Glycyl lysine isopeptide (Lys-Gly) (interchain with G-Cter in SUMO1); alternate). K225 is covalently cross-linked (Glycyl lysine isopeptide (Lys-Gly) (interchain with G-Cter in SUMO2); alternate). K445 participates in a covalent cross-link: Glycyl lysine isopeptide (Lys-Gly) (interchain with G-Cter in SUMO2). N6-acetyllysine is present on K453.

Belongs to the RuvB family. In terms of assembly, forms homohexameric rings. Can form a dodecamer with RUVBL2 made of two stacked hexameric rings; however, even though RUVBL1 and RUVBL2 are present in equimolar ratio, the oligomeric status of each hexamer is not known. Oligomerization may regulate binding to nucleic acids and conversely, binding to nucleic acids may affect the dodecameric assembly. Interaction of the complex with DHX34 results in conformational changes of the N-terminus of the RUVBL2 subunits, resulting in loss of nucleotide binding ability and ATP hydrolysis of the complex. Interacts with the transcriptional activation domain of MYC. Component of the RNA polymerase II holoenzyme complex. May also act to bridge the LEF1/TCF1-CTNNB1 complex and TBP. Component of the NuA4 histone acetyltransferase complex which contains the catalytic subunit KAT5/TIP60 and the subunits EP400, TRRAP/PAF400, BRD8/SMAP, EPC1, DMAP1/DNMAP1, RUVBL1/TIP49, RUVBL2, ING3, actin, ACTL6A/BAF53A, MORF4L1/MRG15, MORF4L2/MRGX, MRGBP, YEATS4/GAS41, VPS72/YL1 and MEAF6. The NuA4 complex interacts with MYC and the adenovirus E1A protein. RUVBL1 interacts with EP400. Component of a NuA4-related complex which contains EP400, TRRAP/PAF400, SRCAP, BRD8/SMAP, EPC1, DMAP1/DNMAP1, RUVBL1/TIP49, RUVBL2, actin, ACTL6A/BAF53A, VPS72 and YEATS4/GAS41. Component of the BAF53 complex, at least composed of ACTL6A/BAF53A, RUVBL1/TIP49, SMARCA2/BRM, and TRRAP/PAF400. Component of some MLL1/MLL complex, at least composed of the core components KMT2A/MLL1, ASH2L, HCFC1/HCF1, WDR5 and RBBP5, as well as the facultative components BACC1, CHD8, E2F6, HSP70, INO80C, KANSL1, LAS1L, MAX, MCRS1, MGA, MYST1/MOF, PELP1, PHF20, PRP31, RING2, RUVB1/TIP49A, RUVB2/TIP49B, SENP3, TAF1, TAF4, TAF6, TAF7, TAF9 and TEX10. Associates with alpha and gamma tubulins, particularly during metaphase and early anaphase. Interacts with NPAT. Component of the chromatin-remodeling INO80 complex; specifically part of a complex module associated with the helicase ATP-binding and the helicase C-terminal domain of INO80. Interacts with IGHMBP2. Interacts with OFD1. Interacts with HINT1. Component of a complex with USP49 and PSMC5. Component of a SWR1-like complex. Component of the R2TP complex composed at least of RUVBL1, RUVBL2, RPAP3 and PIHD1. Component of the PAQosome complex which is responsible for the biogenesis of several protein complexes and which consists of R2TP complex members RUVBL1, RUVBL2, RPAP3 and PIH1D1, URI complex members PFDN2, PFDN6, PDRG1, UXT and URI1 as well as ASDURF, POLR2E and DNAAF10/WDR92. Interacts with PIH1D1. Interacts with ITFG1. Interacts with WAC; WAC positively regulates MTOR activity by promoting the assembly of the TTT complex composed of TELO2, TTI1 and TTI2 and the RUVBL complex composed of RUVBL1 and RUVBL2 into the TTT-RUVBL complex which leads to the dimerization of the mTORC1 complex and its subsequent activation. The RUVBL1/RUVBL2 complex interacts with ZNHIT1 (via HIT-type zinc finger), ZNHIT3 (via HIT-type zinc finger), ZNHIT6 (via HIT-type zinc finger) and DDX59/ZNHIT5 (via HIT-type zinc finger) in the presence of ADP. Interacts with NOPCHAP1; the interaction is direct and disrupted upon ATP binding. Interacts with SMG1. Interacts with NOP2, NOP56 and NUFIP1.

The protein resides in the nucleus matrix. It is found in the nucleus. Its subcellular location is the nucleoplasm. It localises to the cytoplasm. The protein localises to the membrane. The protein resides in the cytoskeleton. It is found in the microtubule organizing center. Its subcellular location is the centrosome. It localises to the dynein axonemal particle. The catalysed reaction is ATP + H2O = ADP + phosphate + H(+). Its function is as follows. Possesses single-stranded DNA-stimulated ATPase and ATP-dependent DNA helicase (3' to 5') activity; hexamerization is thought to be critical for ATP hydrolysis and adjacent subunits in the ring-like structure contribute to the ATPase activity. Component of the NuA4 histone acetyltransferase complex which is involved in transcriptional activation of select genes principally by acetylation of nucleosomal histones H4 and H2A. This modification may both alter nucleosome-DNA interactions and promote interaction of the modified histones with other proteins which positively regulate transcription. This complex may be required for the activation of transcriptional programs associated with oncogene and proto-oncogene mediated growth induction, tumor suppressor mediated growth arrest and replicative senescence, apoptosis, and DNA repair. The NuA4 complex ATPase and helicase activities seem to be, at least in part, contributed by the association of RUVBL1 and RUVBL2 with EP400. NuA4 may also play a direct role in DNA repair when recruited to sites of DNA damage. Component of a SWR1-like complex that specifically mediates the removal of histone H2A.Z/H2AZ1 from the nucleosome. Proposed core component of the chromatin remodeling INO80 complex which exhibits DNA- and nucleosome-activated ATPase activity and catalyzes ATP-dependent nucleosome sliding. Plays an essential role in oncogenic transformation by MYC and also modulates transcriptional activation by the LEF1/TCF1-CTNNB1 complex. Essential for cell proliferation. May be able to bind plasminogen at cell surface and enhance plasminogen activation. The polypeptide is RuvB-like 1 (Ruvbl1) (Mus musculus (Mouse)).